Here is a 615-residue protein sequence, read N- to C-terminus: Vitamin B12 transporter BtuB (615 aa).

The N-terminal stretch at 1 to 20 (MIKKVSLMTALSVTAFSGWA) is a signal peptide. The TonB box motif lies at 25 to 32 (DSLVVTAN). The TBDR plug domain maps to 37–151 (PANTVLAPTS…IGGVVNIITT (115 aa)). Cyanocob(III)alamin is bound by residues S84, N91, and 109-110 (VT). Positions 154 to 615 (KDGTTLNAGV…EYTLSGSYTF (462 aa)) constitute a TBDR beta-barrel domain. Transmembrane regions (beta stranded) follow at residues 157 to 164 (TTLNAGVG), 168 to 177 (YQNYGGSTQQ), and 183 to 194 (TRVTLAGDYTYT). The Ca(2+) site is built by D198, Q210, D212, and D214. Beta stranded transmembrane passes span 216–226 (YMNKTIYGALE) and 231–247 (DQWSGFVRGFGYSNRTA). Ca(2+) is bound by residues Y248 and D249. Residue A250 coordinates cyanocob(III)alamin. Residue D262 coordinates Ca(2+). A run of 17 beta stranded transmembrane segments spans residues 264–278 (RQLYSQTWDTGLRFN), 280–297 (GIFHSQLLSSYSHSKDYN), 310–326 (TLDEIKQYNVQWTNSVD), 329–338 (HGNVGAGVDW), 354–370 (TNLRNTGVYLTALQKFG), 372–382 (FTLEGAARSDD), 386–401 (FGRHGTWQSSAAWEFI), 404–418 (YRFIASYGTAYKAPN), 435–444 (ESKQWEGAFE), 450–459 (VSWRVSAYRN), 474–491 (YYNVGKARIKGVEATASF), 495–510 (PLTHTVGYDYVDARNA), 518–530 (RRAKQQVKYQLDT), 536–551 (DWSLTYHYLGTRYDTD), 559–573 (KVKMGGVSLWDLAVS), 586–597 (IANLFDKDYETV), and 603–615 (AGREYTLSGSYTF). A cyanocob(III)alamin-binding site is contributed by T310. R518 contributes to the cyanocob(III)alamin binding site. Residues 598 to 615 (YGYETAGREYTLSGSYTF) carry the TonB C-terminal box motif.

Belongs to the TonB-dependent receptor family. BtuB (TC 1.B.14.3.1) subfamily.

It is found in the cell outer membrane. In terms of biological role, involved in the active translocation of vitamin B12 (cyanocobalamin) across the outer membrane to the periplasmic space. It derives its energy for transport by interacting with the trans-periplasmic membrane protein TonB. This chain is Vitamin B12 transporter BtuB, found in Enterobacter sp. (strain 638).